A 541-amino-acid chain; its full sequence is Malate synthase (541 aa).

Arg172 functions as the Proton acceptor in the catalytic mechanism. Asp452 functions as the Proton donor in the catalytic mechanism.

The protein belongs to the malate synthase family.

Its subcellular location is the cytoplasm. It catalyses the reaction glyoxylate + acetyl-CoA + H2O = (S)-malate + CoA + H(+). Its pathway is carbohydrate metabolism; glyoxylate cycle; (S)-malate from isocitrate: step 2/2. This is Malate synthase (mls) from Myxococcus xanthus (strain DK1622).